The following is a 404-amino-acid chain: Pyrophosphate--fructose 6-phosphate 1-phosphotransferase (404 aa).

Glycine 12 lines the diphosphate pocket. Aspartate 121 provides a ligand contact to Mg(2+). Substrate is bound by residues 149 to 151 (TID), 194 to 196 (MGR), glutamate 266, and 323 to 326 (YFSR). Aspartate 151 functions as the Proton acceptor in the catalytic mechanism.

This sequence belongs to the phosphofructokinase type A (PFKA) family. PPi-dependent PFK group II subfamily. Clade 'P' sub-subfamily. As to quaternary structure, homodimer. The cofactor is Mg(2+).

Its subcellular location is the cytoplasm. The catalysed reaction is beta-D-fructose 6-phosphate + diphosphate = beta-D-fructose 1,6-bisphosphate + phosphate + H(+). It participates in carbohydrate degradation; glycolysis; D-glyceraldehyde 3-phosphate and glycerone phosphate from D-glucose: step 3/4. Its activity is regulated as follows. Non-allosteric. Functionally, catalyzes the phosphorylation of D-fructose 6-phosphate, the first committing step of glycolysis. Uses inorganic phosphate (PPi) as phosphoryl donor instead of ATP like common ATP-dependent phosphofructokinases (ATP-PFKs), which renders the reaction reversible, and can thus function both in glycolysis and gluconeogenesis. Consistently, PPi-PFK can replace the enzymes of both the forward (ATP-PFK) and reverse (fructose-bisphosphatase (FBPase)) reactions. The sequence is that of Pyrophosphate--fructose 6-phosphate 1-phosphotransferase from Propionibacterium freudenreichii subsp. shermanii (strain ATCC 9614 / DSM 4902 / CIP 103027 / NCIMB 8099 / CIRM-BIA1).